A 269-amino-acid chain; its full sequence is Zinc transporter ZupT (269 aa).

Transmembrane regions (helical) follow at residues 5–25, 38–58, 75–95, 125–145, 158–178, 190–210, 212–232, and 249–269; these read VLLAFGLTLFAGLATGVGSLI, SLALGFSAGVMIYVSLVEIFV, WMTIAGFFGGMLFIALIDKFI, MGIFTALAIGIHNFPEGIATF, IAIAVAIHNIPEGIAVSVPIF, LSFLSGLAEPVGALVAFLLLM, FLTDVMFGIIFAGVAGIMVFI, and LSMYGLVGGMAVMAISLVLLV. Asn-137 and Glu-140 together coordinate Fe(2+). Positions 140 and 165 each coordinate Zn(2+). Fe(2+)-binding residues include Asn-166, Glu-169, and Glu-198. Zn(2+) is bound at residue Glu-169.

This sequence belongs to the ZIP transporter (TC 2.A.5) family. ZupT subfamily.

The protein resides in the cell membrane. It catalyses the reaction Zn(2+)(in) = Zn(2+)(out). Mediates zinc uptake. May also transport other divalent cations. This Lysinibacillus sphaericus (strain C3-41) protein is Zinc transporter ZupT.